A 253-amino-acid chain; its full sequence is MEKLLIVNADDFGLCKGQNYGIIDAFRNGVVSSTTAMMNSVDINHAAELSAQYPALPVGMHFVLTFGRPLTAMPSLTDANGELGKWLWQRAGAGTLDLNEIAQELECQFERFSAVFGRPPTHIDSHHHVHMLPQIYPLVAAFAREKSLPLRIDRHEVQQHGLTLDNPRSSEWFNAGFYGENLSEPSFLQLLEHADQQGVNSLEIMCHPAFIDQTLMTSGYCYPRLTELAILTSPTLKPAIAQRGYRLGSFLDC.

Mg(2+) is bound by residues His-61 and His-126.

Belongs to the YdjC deacetylase family. ChbG subfamily. As to quaternary structure, homodimer. The cofactor is Mg(2+).

The protein resides in the cytoplasm. The catalysed reaction is N,N'-diacetylchitobiose + H2O = N-acetyl-beta-D-glucosaminyl-(1-&gt;4)-D-glucosamine + acetate. It carries out the reaction diacetylchitobiose-6'-phosphate + H2O = N'-monoacetylchitobiose-6'-phosphate + acetate. Its pathway is glycan degradation; chitin degradation. Functionally, involved in the degradation of chitin. ChbG is essential for growth on the acetylated chitooligosaccharides chitobiose and chitotriose but is dispensable for growth on cellobiose and chitosan dimer, the deacetylated form of chitobiose. Deacetylation of chitobiose-6-P and chitotriose-6-P is necessary for both the activation of the chb promoter by the regulatory protein ChbR and the hydrolysis of phosphorylated beta-glucosides by the phospho-beta-glucosidase ChbF. Catalyzes the removal of only one acetyl group from chitobiose-6-P to yield monoacetylchitobiose-6-P, the inducer of ChbR and the substrate of ChbF. This chain is Chitooligosaccharide deacetylase, found in Yersinia pseudotuberculosis serotype O:1b (strain IP 31758).